The following is a 272-amino-acid chain: Phosphoglycolate phosphatase (272 aa).

Catalysis depends on Asp19, which acts as the Nucleophile. The Mg(2+) site is built by Asp19, Asp21, and Asp182.

Belongs to the HAD-like hydrolase superfamily. CbbY/CbbZ/Gph/YieH family. Mg(2+) is required as a cofactor.

The enzyme catalyses 2-phosphoglycolate + H2O = glycolate + phosphate. The protein operates within organic acid metabolism; glycolate biosynthesis; glycolate from 2-phosphoglycolate: step 1/1. Functionally, specifically catalyzes the dephosphorylation of 2-phosphoglycolate. Is involved in the dissimilation of the intracellular 2-phosphoglycolate formed during the DNA repair of 3'-phosphoglycolate ends, a major class of DNA lesions induced by oxidative stress. This Pseudomonas syringae pv. syringae (strain B728a) protein is Phosphoglycolate phosphatase.